A 606-amino-acid polypeptide reads, in one-letter code: 4-hydroxy-3-methylbut-2-en-1-yl diphosphate synthase (flavodoxin) (606 aa).

4 residues coordinate [4Fe-4S] cluster: Cys513, Cys516, Cys547, and Glu554.

This sequence belongs to the IspG family. It depends on [4Fe-4S] cluster as a cofactor.

It catalyses the reaction (2E)-4-hydroxy-3-methylbut-2-enyl diphosphate + oxidized [flavodoxin] + H2O + 2 H(+) = 2-C-methyl-D-erythritol 2,4-cyclic diphosphate + reduced [flavodoxin]. It functions in the pathway isoprenoid biosynthesis; isopentenyl diphosphate biosynthesis via DXP pathway; isopentenyl diphosphate from 1-deoxy-D-xylulose 5-phosphate: step 5/6. In terms of biological role, converts 2C-methyl-D-erythritol 2,4-cyclodiphosphate (ME-2,4cPP) into 1-hydroxy-2-methyl-2-(E)-butenyl 4-diphosphate. The sequence is that of 4-hydroxy-3-methylbut-2-en-1-yl diphosphate synthase (flavodoxin) from Chlamydia abortus (strain DSM 27085 / S26/3) (Chlamydophila abortus).